The sequence spans 413 residues: Alpha-1-antitrypsin-like protein CM55-ST (413 aa).

The first 24 residues, 1–24 (MPSSISWGLLLLAALSCLGPGSLA), serve as a signal peptide directing secretion. Pyrrolidone carboxylic acid is present on Gln-25. 4 N-linked (GlcNAc...) asparagine glycosylation sites follow: Asn-65, Asn-102, Asn-165, and Asn-266. The interval 368-387 (GGTVLGNIRSTLRYEVIFDR) is RCL.

This sequence belongs to the serpin family. In terms of tissue distribution, expressed in liver.

The polypeptide is Alpha-1-antitrypsin-like protein CM55-ST (Tamias sibiricus (Siberian chipmunk)).